The chain runs to 447 residues: N-succinylarginine dihydrolase (447 aa).

Substrate contacts are provided by residues 19–28 (AGLSFGNEAS), Asn-110, and 137–138 (HR). Glu-174 is a catalytic residue. Arg-212 provides a ligand contact to substrate. His-248 is a catalytic residue. Substrate-binding residues include Asp-250 and Asn-359. The Nucleophile role is filled by Cys-365.

Belongs to the succinylarginine dihydrolase family. As to quaternary structure, homodimer.

It catalyses the reaction N(2)-succinyl-L-arginine + 2 H2O + 2 H(+) = N(2)-succinyl-L-ornithine + 2 NH4(+) + CO2. Its pathway is amino-acid degradation; L-arginine degradation via AST pathway; L-glutamate and succinate from L-arginine: step 2/5. In terms of biological role, catalyzes the hydrolysis of N(2)-succinylarginine into N(2)-succinylornithine, ammonia and CO(2). The sequence is that of N-succinylarginine dihydrolase from Escherichia coli O139:H28 (strain E24377A / ETEC).